Here is a 304-residue protein sequence, read N- to C-terminus: Acetyl-coenzyme A carboxylase carboxyl transferase subunit beta (304 aa).

One can recognise a CoA carboxyltransferase N-terminal domain in the interval 25–294; the sequence is VWTKCDSCGQ…PSVVESKADT (270 aa). The Zn(2+) site is built by cysteine 29, cysteine 32, cysteine 48, and cysteine 51. Residues 29 to 51 form a C4-type zinc finger; sequence CDSCGQVLYRAELERNLEVCPKC.

Belongs to the AccD/PCCB family. Acetyl-CoA carboxylase is a heterohexamer composed of biotin carboxyl carrier protein (AccB), biotin carboxylase (AccC) and two subunits each of ACCase subunit alpha (AccA) and ACCase subunit beta (AccD). Zn(2+) is required as a cofactor.

It localises to the cytoplasm. It carries out the reaction N(6)-carboxybiotinyl-L-lysyl-[protein] + acetyl-CoA = N(6)-biotinyl-L-lysyl-[protein] + malonyl-CoA. The protein operates within lipid metabolism; malonyl-CoA biosynthesis; malonyl-CoA from acetyl-CoA: step 1/1. Functionally, component of the acetyl coenzyme A carboxylase (ACC) complex. Biotin carboxylase (BC) catalyzes the carboxylation of biotin on its carrier protein (BCCP) and then the CO(2) group is transferred by the transcarboxylase to acetyl-CoA to form malonyl-CoA. The sequence is that of Acetyl-coenzyme A carboxylase carboxyl transferase subunit beta from Yersinia pseudotuberculosis serotype O:1b (strain IP 31758).